Reading from the N-terminus, the 190-residue chain is Myosin, light chain 1, alkali; skeletal, fast (190 aa).

Over residues 1 to 17 (MAPKKDAKKPEPPKKAE) the composition is skewed to basic and acidic residues. The interval 1–33 (MAPKKDAKKPEPPKKAEPAPAPAPAPEPPKADA) is disordered. Positions 19-28 (APAPAPAPEP) are enriched in pro residues. EF-hand domains lie at 46 to 81 (DQMEDYREAFLLFDRVGDSKVAYNQIADIMRALGQN) and 123 to 158 (ATYDDYVEGLRVFDKEGNGTVMGAELRIVLSTLGEK).

As to quaternary structure, myosin is a hexamer of 2 heavy chains and 4 light chains. Does not bind calcium. As to expression, expressed in fast muscle fibers during skeletal muscle differentiation.

In terms of biological role, non-regulatory myosin light chain required for proper formation and/or maintenance of myofibers, and thus appropriate muscle function. The polypeptide is Myosin, light chain 1, alkali; skeletal, fast (Danio rerio (Zebrafish)).